The primary structure comprises 198 residues: Chromophore lyase CpcS/CpeS 2 (198 aa).

This sequence belongs to the CpcS/CpeS biliprotein lyase family.

The protein resides in the plastid. Its subcellular location is the organellar chromatophore. Covalently attaches a chromophore to Cys residue(s) of phycobiliproteins. This Paulinella chromatophora protein is Chromophore lyase CpcS/CpeS 2.